A 424-amino-acid polypeptide reads, in one-letter code: MDSAPSGLTLTVIILSIILLAFISTVVSAYETAITSLTPYRWKNYIKTNNKQDKLSTKIINHFQNHYSSCLITILITNNIVAIMVSNILFLALEQTIKNELLSSVLNLVVSGVLIVSFCEILPKTLGRINVIRTLVLFAYLVYFFYLIFWPITKLTSLILKKYENPLPVSRKDVYYFIDEIEQNGLFSKEDSLLIKKTLIFDQVLVKKVMIKWKKVAYCYLNDSINLIAKQFLQRQFSRMPVVDKTTNKIVGFIHLKDFFTAKEANPKSLDLNQLLYPVVLVQDSTPIKQALRQMRLNRAHLAVVNDKHEKTIGIVSMEDIIEELVGEIYDEHDDIQPIQVLDENVWLVLPNVKAAYFFNKWIKPDLVKSKNITIQHYLASLDNDSFACQNKLDTPLFSVEVIADSEDKTKILYEIRKKSDVIA.

One can recognise a CNNM transmembrane domain in the interval S6–D191. 4 consecutive transmembrane segments (helical) span residues G7–V27, L71–L91, L101–I121, and L135–L155. CBS domains lie at M210–L270 and L272–E332.

The protein belongs to the UPF0053 family.

It is found in the cell membrane. The protein is UPF0053 protein MG146 of Mycoplasma genitalium (strain ATCC 33530 / DSM 19775 / NCTC 10195 / G37) (Mycoplasmoides genitalium).